The chain runs to 150 residues: Macrodomain Ter protein (150 aa).

Belongs to the MatP family. In terms of assembly, homodimer.

It is found in the cytoplasm. In terms of biological role, required for spatial organization of the terminus region of the chromosome (Ter macrodomain) during the cell cycle. Prevents early segregation of duplicated Ter macrodomains during cell division. Binds specifically to matS, which is a 13 bp signature motif repeated within the Ter macrodomain. This Shigella dysenteriae serotype 1 (strain Sd197) protein is Macrodomain Ter protein.